Consider the following 688-residue polypeptide: PTS system glucoside-specific EIICBA component (688 aa).

One can recognise a PTS EIIC type-1 domain in the interval 3–427 (KKLFGQLQRI…FKLKTPGRED (425 aa)). A run of 10 helical transmembrane segments spans residues 12–32 (IGKALMLPVAILPAAGILLAF), 81–101 (LGLAGGDGVAALAALVGYLIM), 137–157 (LVLGIPTLQTGVFGGIIMGAL), 182–202 (FVPIVTSVVAIATGVLLSFAW), 223–243 (LTTFIFGIIERSLIPFGLHHI), 284–304 (AFTTGKYPFMMFGLPAAAFAI), 315–335 (VVGGLMLSAGLTAFLTGITEP), 340–360 (FLFVAPVLYGIHVLLAGTSFL), 364–384 (LLGVKIGMTFSGGFIDYILYG), and 395–415 (LVIPVGIVYAIVYYFLFDFAI). Residues 438 to 519 (AKLPFDVLDA…AKIMSGEITK (82 aa)) enclose the PTS EIIB type-1 domain. The active-site Phosphocysteine intermediate; for EIIB activity is cysteine 460. A PTS EIIA type-1 domain is found at 560 to 664 (DQVFAGKMMG…SIVTPMIITN (105 aa)). The active-site Tele-phosphohistidine intermediate; for EIIA activity is the histidine 612.

It localises to the cell membrane. Functionally, the phosphoenolpyruvate-dependent sugar phosphotransferase system (sugar PTS), a major carbohydrate active -transport system, catalyzes the phosphorylation of incoming sugar substrates concomitantly with their translocation across the cell membrane. This system is involved in alpha- and beta-glucoside transport. This is PTS system glucoside-specific EIICBA component (glcB) from Staphylococcus aureus (strain USA300).